An 83-amino-acid polypeptide reads, in one-letter code: Three-finger toxin W-IV (83 aa).

The signal sequence occupies residues 1 to 21 (MKTLLLTLVVVTIVCLDLGHT). 4 disulfides stabilise this stretch: Cys24/Cys45, Cys38/Cys62, Cys64/Cys75, and Cys76/Cys81.

The protein belongs to the three-finger toxin family. Short-chain subfamily. Type I alpha-neurotoxin sub-subfamily. In terms of tissue distribution, expressed by the venom gland.

The protein localises to the secreted. Binds to muscle nicotinic acetylcholine receptor (nAChR) and inhibit acetylcholine from binding to the receptor, thereby impairing neuromuscular transmission. The protein is Three-finger toxin W-IV of Walterinnesia aegyptia (Desert black snake).